A 409-amino-acid polypeptide reads, in one-letter code: U-box domain-containing protein 28 (409 aa).

Residues 10-84 (TVPCFFKCPI…DHWSDSINRR (75 aa)) form the U-box domain. 3 ARM repeats span residues 178-218 (RLSN…FIAV), 219-261 (DAES…AIAS), and 263-304 (KRVK…AISS).

The catalysed reaction is S-ubiquitinyl-[E2 ubiquitin-conjugating enzyme]-L-cysteine + [acceptor protein]-L-lysine = [E2 ubiquitin-conjugating enzyme]-L-cysteine + N(6)-ubiquitinyl-[acceptor protein]-L-lysine.. It functions in the pathway protein modification; protein ubiquitination. Its function is as follows. Functions as an E3 ubiquitin ligase. The chain is U-box domain-containing protein 28 (PUB28) from Arabidopsis thaliana (Mouse-ear cress).